We begin with the raw amino-acid sequence, 150 residues long: Small ribosomal subunit protein bS6 (150 aa).

The disordered stretch occupies residues 92–150 (KGINKPAKPKKTFKKTFVARKFSRDDESKTHSTEEPRRANTKSTYKKSTSFSQDNKNKK). Over residues 98-109 (AKPKKTFKKTFV) the composition is skewed to basic residues. Residues 113–129 (FSRDDESKTHSTEEPRR) are compositionally biased toward basic and acidic residues. Positions 132–141 (TKSTYKKSTS) are enriched in low complexity.

Belongs to the bacterial ribosomal protein bS6 family.

In terms of biological role, binds together with bS18 to 16S ribosomal RNA. The chain is Small ribosomal subunit protein bS6 from Mycoplasmopsis pulmonis (strain UAB CTIP) (Mycoplasma pulmonis).